Consider the following 1152-residue polypeptide: Autotransporter adhesin BpaC (1152 aa).

The first 71 residues, Met-1–Asn-71, serve as a signal peptide directing secretion. The surface exposed passenger domain stretch occupies residues Asn-72–Gly-1061. Disordered regions lie at residues Gly-420 to Thr-886 and Thr-900 to Ala-949. Positions Ala-427 to Asp-442 are enriched in polar residues. A compositionally biased stretch (low complexity) spans Asn-443 to Gly-504. Over residues Asp-505–Glu-519 the composition is skewed to polar residues. Residues Asn-520–Gly-588 show a composition bias toward low complexity. Residues Asp-589 to Glu-603 are compositionally biased toward polar residues. Low complexity predominate over residues Asn-604 to Gly-630. The span at Asp-631–Glu-645 shows a compositional bias: polar residues. Low complexity predominate over residues Asn-646–Gly-672. Residues Asp-673 to Glu-687 are compositionally biased toward polar residues. Residues Asn-688–Gly-714 are compositionally biased toward low complexity. The segment covering Asp-715–Glu-729 has biased composition (polar residues). Low complexity predominate over residues Asn-730 to Gly-756. The span at Asp-757 to Glu-771 shows a compositional bias: polar residues. Composition is skewed to low complexity over residues Asn-772–Gly-840 and Thr-848–Thr-886. The segment at Ile-1062 to Gly-1099 is outer membrane translocation of the passenger domain. Positions Lys-1100–Trp-1152 are translocator domain.

The protein belongs to the autotransporter-2 (AT-2) (TC 1.B.40) family. As to quaternary structure, homotrimer.

It is found in the cell surface. The protein localises to the cell outer membrane. Functionally, involved in virulence. Mediates adherence to human respiratory epithelial cells. This is Autotransporter adhesin BpaC from Burkholderia pseudomallei (strain 1026b).